We begin with the raw amino-acid sequence, 159 residues long: Putative ribosomal RNA large subunit methyltransferase H (159 aa).

S-adenosyl-L-methionine is bound by residues Leu76, Gly108, and 127-132; that span reads LSAMTF.

Belongs to the RNA methyltransferase RlmH family.

It is found in the cytoplasm. It carries out the reaction pseudouridine(1915) in 23S rRNA + S-adenosyl-L-methionine = N(3)-methylpseudouridine(1915) in 23S rRNA + S-adenosyl-L-homocysteine + H(+). Specifically methylates the pseudouridine at position 1915 (m3Psi1915) in 23S rRNA. The polypeptide is Putative ribosomal RNA large subunit methyltransferase H (Methanospirillum hungatei JF-1 (strain ATCC 27890 / DSM 864 / NBRC 100397 / JF-1)).